A 1456-amino-acid polypeptide reads, in one-letter code: Macrophage mannose receptor 1 (1456 aa).

The signal sequence occupies residues 1 to 18 (MRLPLLLVFASVIPGAVL). Over 19-1389 (LLDTRQFLIY…DPSKPSSNVA (1371 aa)) the chain is Extracellular. Residues 22–142 (TRQFLIYNED…SGLWSRWKIY (121 aa)) form the Ricin B-type lectin domain. Disulfide bonds link C35–C49 and C74–C91. An N-linked (GlcNAc...) asparagine glycan is attached at N104. The 49-residue stretch at 163–211 (ANGATCAFPFKFENKWYADCTSAGRSDGWLWCGTTTDYDTDKLFGYCPL) folds into the Fibronectin type-II domain. Intrachain disulfides connect C168–C194, C182–C209, C247–C340, and C316–C332. Residues 225 to 341 (LTSVSYQINS…CVQKLGYICK (117 aa)) enclose the C-type lectin 1 domain. N-linked (GlcNAc...) asparagine glycosylation occurs at N344. 4 consecutive C-type lectin domains span residues 369 to 487 (YAGH…YICK), 511 to 626 (HHFY…FVCK), 655 to 778 (RTSL…WICQ), and 807 to 923 (YKDY…FICQ). 2 disulfides stabilise this stretch: C391/C486 and C463/C478. The N-linked (GlcNAc...) asparagine glycan is linked to N529. 7 disulfides stabilise this stretch: C532–C625, C600–C617, C646–C659, C680–C777, C753–C769, C828–C922, and C899–C914. 2 N-linked (GlcNAc...) asparagine glycosylation sites follow: N926 and N930. 3 C-type lectin domains span residues 952–1080 (YSNK…YICQ), 1102–1213 (YGKS…FLCK), and 1241–1356 (FHGH…YICK). 6 cysteine pairs are disulfide-bonded: C977–C1079, C1052–C1071, C1123–C1212, C1190–C1204, C1263–C1355, and C1332–C1347. N1160 carries N-linked (GlcNAc...) asparagine glycosylation. The N-linked (GlcNAc...) asparagine glycan is linked to N1205. A helical membrane pass occupies residues 1390–1410 (GVVIIVILLILTGAGLAAYFF). Over 1411–1456 (YKKRRVHLPQEGAFENTLYFNSQSSPGTSDMKDLVGNIEQNEHSVI) the chain is Cytoplasmic.

In terms of assembly, (Microbial infection) Interacts with Dengue virus. As to quaternary structure, (Microbial infection) May act as a receptor for hepatitis B virus, enabling uptake of the virus in hepatic dendritic cells.

The protein resides in the endosome membrane. It localises to the cell membrane. Its function is as follows. Mediates the endocytosis of glycoproteins by macrophages. Binds both sulfated and non-sulfated polysaccharide chains. (Microbial infection) Acts as a phagocytic receptor for bacteria, fungi and other pathogens. In terms of biological role, (Microbial infection) Acts as a receptor for Dengue virus envelope protein E. Functionally, (Microbial infection) Interacts with Hepatitis B virus envelope protein. This Homo sapiens (Human) protein is Macrophage mannose receptor 1 (MRC1).